The primary structure comprises 514 residues: Na(+)/H(+) antiporter NhaB (514 aa).

12 helical membrane-spanning segments follow: residues 23 to 43, 63 to 83, 97 to 117, 120 to 140, 144 to 164, 202 to 222, 238 to 258, 303 to 323, 357 to 377, 391 to 411, 447 to 467, and 475 to 495; these read LALL…PFIA, PLLP…TSAA, LLLM…LFIF, LLLS…AAAF, FLDA…FYGI, LMMH…VGEP, FFLR…LTCM, AIIG…VGLI, LTVF…APII, LFYL…VGTI, ATPN…APLI, and VWMA…CVEF.

This sequence belongs to the NhaB Na(+)/H(+) (TC 2.A.34) antiporter family.

It is found in the cell inner membrane. It catalyses the reaction 2 Na(+)(in) + 3 H(+)(out) = 2 Na(+)(out) + 3 H(+)(in). In terms of biological role, na(+)/H(+) antiporter that extrudes sodium in exchange for external protons. The chain is Na(+)/H(+) antiporter NhaB from Salmonella paratyphi B (strain ATCC BAA-1250 / SPB7).